Consider the following 352-residue polypeptide: MLGDTEVLANLRVLQTELTGAGILEPLLSADGTTDVLVTAPDSVWVDDGNGLRRSQIRFADESAVRRLAQRLALAAGRRLDDAQPWVDGQLTGIGVGGFAVRLHAVLPPVATQGTCLSLRVLRPATQDLAALAAAGAIDPAAAALVADIVTARLAFLVCGGTGAGKTTLLAAMLGAVSPDERIVCVEDAAELAPRHPHLVKLVARRANVEGIGEVTVRQLVRQALRMRPDRIVVGEVRGAEVVDLLAALNTGHEGGAGTVHANNPGEVPARMEALGALGGLDRAALHSQLAAAVQVLLHVARDRAGRRRLAEIAVLRQAEGRVQAVTVWHADRGMSDDAAALHDLLRSRASA.

An ATP-binding site is contributed by 160 to 167 (GGTGAGKT).

This sequence belongs to the GSP E family.

It is found in the cytoplasm. The sequence is that of Putative conjugal transfer protein MT3759 from Mycobacterium tuberculosis (strain CDC 1551 / Oshkosh).